A 77-amino-acid polypeptide reads, in one-letter code: MAFLKKSLFLVLFLGLVPLFLCENEKREGENEKEENDDQSEEKRSLGSFMKGVGKGLATVGKIVADQFGKLLEAGQG.

The first 22 residues, 1–22, serve as a signal peptide directing secretion; that stretch reads MAFLKKSLFLVLFLGLVPLFLC. A propeptide spanning residues 23 to 42 is cleaved from the precursor; it reads ENEKREGENEKEENDDQSEE. Residue glutamine 76 is modified to Glutamine amide.

Belongs to the frog skin active peptide (FSAP) family. Dermatoxin subfamily. As to expression, expressed by the skin glands.

It localises to the secreted. Its function is as follows. Possesses a potent antimicrobial activity against Gram-positive and Gram-negative bacteria. Probably acts by disturbing membrane functions with its amphipathic structure. This chain is Dermatoxin-A1, found in Agalychnis annae (Blue-sided leaf frog).